The following is a 77-amino-acid chain: Small ribosomal subunit protein bS20 (77 aa).

The protein belongs to the bacterial ribosomal protein bS20 family.

Binds directly to 16S ribosomal RNA. The chain is Small ribosomal subunit protein bS20 from Streptococcus uberis (strain ATCC BAA-854 / 0140J).